Reading from the N-terminus, the 190-residue chain is uncharacterized protein (190 aa).

Disordered stretches follow at residues 1–21 (MALR…ATVG) and 155–190 (PEMG…TQAS). The segment covering 181 to 190 (SPSSHPTQAS) has biased composition (low complexity).

This is an uncharacterized protein from Homo sapiens (Human).